Here is a 347-residue protein sequence, read N- to C-terminus: S-adenosylmethionine:tRNA ribosyltransferase-isomerase (347 aa).

Belongs to the QueA family. In terms of assembly, monomer.

It is found in the cytoplasm. It carries out the reaction 7-aminomethyl-7-carbaguanosine(34) in tRNA + S-adenosyl-L-methionine = epoxyqueuosine(34) in tRNA + adenine + L-methionine + 2 H(+). It functions in the pathway tRNA modification; tRNA-queuosine biosynthesis. Transfers and isomerizes the ribose moiety from AdoMet to the 7-aminomethyl group of 7-deazaguanine (preQ1-tRNA) to give epoxyqueuosine (oQ-tRNA). This Erythrobacter litoralis (strain HTCC2594) protein is S-adenosylmethionine:tRNA ribosyltransferase-isomerase.